Reading from the N-terminus, the 189-residue chain is Large ribosomal subunit protein eL18 (189 aa).

This sequence belongs to the eukaryotic ribosomal protein eL18 family.

It is found in the cytoplasm. The protein is Large ribosomal subunit protein eL18 (RpL18) of Drosophila pseudoobscura pseudoobscura (Fruit fly).